A 212-amino-acid polypeptide reads, in one-letter code: Urease accessory protein UreG 2 (212 aa).

Gly-11–Met-18 serves as a coordination point for GTP.

Belongs to the SIMIBI class G3E GTPase family. UreG subfamily. In terms of assembly, homodimer. UreD, UreF and UreG form a complex that acts as a GTP-hydrolysis-dependent molecular chaperone, activating the urease apoprotein by helping to assemble the nickel containing metallocenter of UreC. The UreE protein probably delivers the nickel.

It localises to the cytoplasm. Its function is as follows. Facilitates the functional incorporation of the urease nickel metallocenter. This process requires GTP hydrolysis, probably effectuated by UreG. Functionally, disrupting the ure2 operon has no effect on urease activity, or pathogen survival in BALB/c mice when inoculated by gavage, but confers slightly enhanced resistance to low pH killing in vitro. This chain is Urease accessory protein UreG 2, found in Brucella suis biovar 1 (strain 1330).